Consider the following 761-residue polypeptide: Probable ATP-dependent RNA helicase DDX20 (761 aa).

The short motif at 26 to 54 (VEFSSLLLSKPVLEGLSASGFQRPSPIQL) is the Q motif element. Residues Arg-48, Gln-53, 70–77 (AKSGTGKT), and 73–78 (GTGKTC) each bind ATP. The region spanning 57 to 231 (IPLGRCGLDL…SRYMREPTFV (175 aa)) is the Helicase ATP-binding domain. The short motif at 175-178 (DEAD) is the DEAD box element. One can recognise a Helicase C-terminal domain in the interval 266-415 (SLLELFSKIP…PIPPGIMEEA (150 aa)). 2 disordered regions span residues 428-525 (PKIP…KSHT) and 570-720 (HDAH…EAGQ). The span at 443 to 456 (KSEQMKSKPSRESH) shows a compositional bias: basic and acidic residues. The segment covering 498-512 (QHDSTITQKQQNNTL) has biased composition (polar residues). Composition is skewed to low complexity over residues 600–613 (SELS…SESS) and 623–635 (ESSS…STLE). Over residues 655–679 (TLPSTRVPQQATRSKQKPCQPQSQD) the composition is skewed to polar residues. Residues 683-707 (HHNLPHKHRTASKSSRRPTGPKRRT) show a composition bias toward basic residues.

The protein belongs to the DEAD box helicase family. DDX20 subfamily. In terms of assembly, part of the core SMN complex.

It localises to the cytoplasm. The protein resides in the nucleus. The enzyme catalyses ATP + H2O = ADP + phosphate + H(+). It catalyses the reaction a ribonucleoside 5'-triphosphate + H2O = a ribonucleoside 5'-diphosphate + phosphate + H(+). In terms of biological role, the SMN complex catalyzes the assembly of small nuclear ribonucleoproteins (snRNPs), the building blocks of the spliceosome, and thereby plays an important role in the splicing of cellular pre-mRNAs. Most spliceosomal snRNPs contain a common set of Sm proteins SNRPB, SNRPD1, SNRPD2, SNRPD3, SNRPE, SNRPF and SNRPG that assemble in a heptameric protein ring on the Sm site of the small nuclear RNA to form the core snRNP (Sm core). In the cytosol, the Sm proteins SNRPD1, SNRPD2, SNRPE, SNRPF and SNRPG are trapped in an inactive 6S pICln-Sm complex by the chaperone CLNS1A that controls the assembly of the core snRNP. To assemble core snRNPs, the SMN complex accepts the trapped 5Sm proteins from CLNS1A forming an intermediate. Binding of snRNA inside 5Sm triggers eviction of the SMN complex, thereby allowing binding of SNRPD3 and SNRPB to complete assembly of the core snRNP. May also play a role in the metabolism of small nucleolar ribonucleoprotein (snoRNPs). This chain is Probable ATP-dependent RNA helicase DDX20 (ddx20), found in Danio rerio (Zebrafish).